The chain runs to 435 residues: Tryptophan synthase beta chain (435 aa).

K92 carries the N6-(pyridoxal phosphate)lysine modification.

This sequence belongs to the TrpB family. Tetramer of two alpha and two beta chains. Pyridoxal 5'-phosphate serves as cofactor.

It catalyses the reaction (1S,2R)-1-C-(indol-3-yl)glycerol 3-phosphate + L-serine = D-glyceraldehyde 3-phosphate + L-tryptophan + H2O. It participates in amino-acid biosynthesis; L-tryptophan biosynthesis; L-tryptophan from chorismate: step 5/5. In terms of biological role, the beta subunit is responsible for the synthesis of L-tryptophan from indole and L-serine. The chain is Tryptophan synthase beta chain from Albidiferax ferrireducens (strain ATCC BAA-621 / DSM 15236 / T118) (Rhodoferax ferrireducens).